The primary structure comprises 448 residues: Solute carrier family 52, riboflavin transporter, member 1 (448 aa).

Transmembrane regions (helical) follow at residues 14 to 34 (LLVALFGMGSWAAVNGIWVEL), 47 to 67 (LPSYLSVVVALGNLGLLVVTL), 79 to 99 (VPIQVVQVLSVVGTALLAPLW), 124 to 144 (ACCTSNVTFLPFLSHLPPPFL), and 147 to 167 (FFLGQGLSALLPCVLALVQGV). Residue N178 is glycosylated (N-linked (GlcNAc...) asparagine). A helical membrane pass occupies residues 191-211 (FPASTFFWALTALLVTSAAAF). The segment at 225-267 (TTGGSGPELQLGSPGAEEEEKEEEEALPLQEPPSQAAGTIPGP) is disordered. A compositionally biased stretch (acidic residues) spans 240-250 (AEEEEKEEEEA). A run of 5 helical transmembrane segments spans residues 280 to 300 (AFLLGLMAFTSAVTNGVLPSV), 315 to 335 (LAVVLGSAANPLACFLAMGVL), 342 to 362 (LVGLSLLGMLFGAYLMALAIL), 369 to 389 (VGTTAGVVLVVLSWVLCLCVF), and 407 to 427 (ALLAAGVAIQVGSLLGAGAMF).

Belongs to the riboflavin transporter family. As to expression, widely expressed. Highly expressed in the testis, placenta and small intestine. Expressed at lower level in other tissues.

It is found in the cell membrane. The catalysed reaction is riboflavin(in) = riboflavin(out). Its activity is regulated as follows. The activity is strongly inhibited by riboflavin analogs, such as lumiflavin. Weakly inhibited by flavin adenine dinucleotide (FAD). Functionally, plasma membrane transporter mediating the uptake by cells of the water soluble vitamin B2/riboflavin that plays a key role in biochemical oxidation-reduction reactions of the carbohydrate, lipid, and amino acid metabolism. Humans are unable to synthesize vitamin B2/riboflavin and must obtain it via intestinal absorption. Its function is as follows. (Microbial infection) May function as a cell receptor to retroviral envelopes similar to the porcine endogenous retrovirus (PERV-A). This Homo sapiens (Human) protein is Solute carrier family 52, riboflavin transporter, member 1.